Reading from the N-terminus, the 250-residue chain is 2,3-bisphosphoglycerate-dependent phosphoglycerate mutase (250 aa).

Substrate contacts are provided by residues Arg-10–Asn-17, Thr-23–Gly-24, Arg-62, Glu-89–Tyr-92, Lys-100, Arg-116–Arg-117, and Gly-185–Asn-186. The active-site Tele-phosphohistidine intermediate is His-11. The active-site Proton donor/acceptor is the Glu-89.

The protein belongs to the phosphoglycerate mutase family. BPG-dependent PGAM subfamily. As to quaternary structure, homodimer.

It carries out the reaction (2R)-2-phosphoglycerate = (2R)-3-phosphoglycerate. It functions in the pathway carbohydrate degradation; glycolysis; pyruvate from D-glyceraldehyde 3-phosphate: step 3/5. In terms of biological role, catalyzes the interconversion of 2-phosphoglycerate and 3-phosphoglycerate. The chain is 2,3-bisphosphoglycerate-dependent phosphoglycerate mutase from Cronobacter sakazakii (strain ATCC BAA-894) (Enterobacter sakazakii).